Here is a 215-residue protein sequence, read N- to C-terminus: MKKVLASATILSLMLVGCSNGGNDESSHKDDSSKTEQKDKSSSQHDSKKDSKRNDTNNKQDNQENKSNKEQTSNQNSNAGEQRTSERPTTNSNGISSDNQNKQQQSVQDNQNKYVAPYQSENATRVARYLSPFEGDRSQALQQLPNFETALSIAKNEANMYGSENKSYNDYSIEQTEDGFRYVFSFKDPSKSNTYSIVTLNRQGQPTVVDPNFQP.

The signal sequence occupies residues 1–17 (MKKVLASATILSLMLVG). The interval 17 to 110 (GCSNGGNDES…NKQQQSVQDN (94 aa)) is disordered. C18 carries the N-palmitoyl cysteine lipid modification. C18 is lipidated: S-diacylglycerol cysteine. The span at 25 to 69 (ESSHKDDSSKTEQKDKSSSQHDSKKDSKRNDTNNKQDNQENKSNK) shows a compositional bias: basic and acidic residues. Positions 70–95 (EQTSNQNSNAGEQRTSERPTTNSNGI) are enriched in polar residues. The segment covering 96 to 110 (SSDNQNKQQQSVQDN) has biased composition (low complexity).

The protein localises to the cell membrane. This is an uncharacterized protein from Staphylococcus epidermidis (strain ATCC 12228 / FDA PCI 1200).